The chain runs to 364 residues: RNA polymerase II holoenzyme cyclin-like subunit (364 aa).

In terms of domain architecture, Cyclin N-terminal spans 53–143 (QQINRLSKRI…VGECEFSLIS (91 aa)). The disordered stretch occupies residues 268–303 (PGFGSQGSQQQAGFSQGNSQGSLQGDSAAAEPKKVT). Over residues 273–289 (QGSQQQAGFSQGNSQGS) the composition is skewed to low complexity.

It belongs to the cyclin family. Cyclin C subfamily. In terms of assembly, component of the SRB8-11 complex, a regulatory module of the Mediator complex.

It localises to the nucleus. Functionally, component of the SRB8-11 complex. The SRB8-11 complex is a regulatory module of the Mediator complex which is itself involved in regulation of basal and activated RNA polymerase II-dependent transcription. The SRB8-11 complex may be involved in the transcriptional repression of a subset of genes regulated by Mediator. It may inhibit the association of the Mediator complex with RNA polymerase II to form the holoenzyme complex. The SRB8-11 complex phosphorylates the C-terminal domain (CTD) of the largest subunit of RNA polymerase II. In Chaetomium globosum (strain ATCC 6205 / CBS 148.51 / DSM 1962 / NBRC 6347 / NRRL 1970) (Soil fungus), this protein is RNA polymerase II holoenzyme cyclin-like subunit (SSN8).